The sequence spans 260 residues: uncharacterized protein (260 aa).

This is an uncharacterized protein from Saccharomyces cerevisiae (strain ATCC 204508 / S288c) (Baker's yeast).